The chain runs to 206 residues: High frequency lysogenization protein HflD homolog (206 aa).

The protein belongs to the HflD family.

The protein localises to the cytoplasm. Its subcellular location is the cell inner membrane. This is High frequency lysogenization protein HflD homolog from Ectopseudomonas mendocina (strain ymp) (Pseudomonas mendocina).